An 88-amino-acid chain; its full sequence is Exodeoxyribonuclease 7 small subunit (88 aa).

The tract at residues 69-88 is disordered; sequence DPMHPDDGEPFDPSLVSTSQ.

Belongs to the XseB family. As to quaternary structure, heterooligomer composed of large and small subunits.

The protein resides in the cytoplasm. The enzyme catalyses Exonucleolytic cleavage in either 5'- to 3'- or 3'- to 5'-direction to yield nucleoside 5'-phosphates.. Bidirectionally degrades single-stranded DNA into large acid-insoluble oligonucleotides, which are then degraded further into small acid-soluble oligonucleotides. In Xylella fastidiosa (strain M23), this protein is Exodeoxyribonuclease 7 small subunit.